The following is a 177-amino-acid chain: ATP synthase subunit delta (177 aa).

It belongs to the ATPase delta chain family. As to quaternary structure, F-type ATPases have 2 components, F(1) - the catalytic core - and F(0) - the membrane proton channel. F(1) has five subunits: alpha(3), beta(3), gamma(1), delta(1), epsilon(1). F(0) has three main subunits: a(1), b(2) and c(10-14). The alpha and beta chains form an alternating ring which encloses part of the gamma chain. F(1) is attached to F(0) by a central stalk formed by the gamma and epsilon chains, while a peripheral stalk is formed by the delta and b chains.

The protein resides in the cell membrane. Its function is as follows. F(1)F(0) ATP synthase produces ATP from ADP in the presence of a proton or sodium gradient. F-type ATPases consist of two structural domains, F(1) containing the extramembraneous catalytic core and F(0) containing the membrane proton channel, linked together by a central stalk and a peripheral stalk. During catalysis, ATP synthesis in the catalytic domain of F(1) is coupled via a rotary mechanism of the central stalk subunits to proton translocation. In terms of biological role, this protein is part of the stalk that links CF(0) to CF(1). It either transmits conformational changes from CF(0) to CF(1) or is implicated in proton conduction. This Streptococcus suis (strain 98HAH33) protein is ATP synthase subunit delta.